The chain runs to 195 residues: UPF0314 protein RL4541 (195 aa).

Transmembrane regions (helical) follow at residues 15 to 35 (FWFV…YMMG), 64 to 84 (WYTP…HLIL), 127 to 147 (GDSI…FFFA), and 150 to 170 (APVA…GYII).

It belongs to the UPF0314 family.

It localises to the cell membrane. This is UPF0314 protein RL4541 from Rhizobium johnstonii (strain DSM 114642 / LMG 32736 / 3841) (Rhizobium leguminosarum bv. viciae).